Here is a 289-residue protein sequence, read N- to C-terminus: Pyridoxal kinase PdxY (289 aa).

Residues Ser9 and 44 to 45 (TQ) each bind substrate. Residues Asp112, Ala144, Glu149, Lys183, and 210–213 (RPLV) each bind ATP. A substrate-binding site is contributed by Asp225.

Belongs to the pyridoxine kinase family. PdxY subfamily. As to quaternary structure, homodimer. Requires Mg(2+) as cofactor.

The catalysed reaction is pyridoxal + ATP = pyridoxal 5'-phosphate + ADP + H(+). It participates in cofactor metabolism; pyridoxal 5'-phosphate salvage; pyridoxal 5'-phosphate from pyridoxal: step 1/1. In terms of biological role, pyridoxal kinase involved in the salvage pathway of pyridoxal 5'-phosphate (PLP). Catalyzes the phosphorylation of pyridoxal to PLP. This is Pyridoxal kinase PdxY from Proteus mirabilis.